A 311-amino-acid polypeptide reads, in one-letter code: tRNA dimethylallyltransferase (311 aa).

13–20 (GPTASGKT) is a binding site for ATP. Substrate is bound at residue 15-20 (TASGKT). Interaction with substrate tRNA stretches follow at residues 38-41 (DSMQ) and 166-170 (QRVLR).

This sequence belongs to the IPP transferase family. In terms of assembly, monomer. The cofactor is Mg(2+).

The catalysed reaction is adenosine(37) in tRNA + dimethylallyl diphosphate = N(6)-dimethylallyladenosine(37) in tRNA + diphosphate. Its function is as follows. Catalyzes the transfer of a dimethylallyl group onto the adenine at position 37 in tRNAs that read codons beginning with uridine, leading to the formation of N6-(dimethylallyl)adenosine (i(6)A). The sequence is that of tRNA dimethylallyltransferase from Staphylococcus aureus (strain Mu3 / ATCC 700698).